The following is a 520-amino-acid chain: Protein EARLY FLOWERING 5 (520 aa).

3 consecutive short sequence motifs (nuclear localization signal) follow at residues 16–23 (YRKQIRKR), 52–59 (IRKLDMSK), and 71–78 (KKRQLEDT). The segment at 83-410 (VKKRKEYDEK…PPSSFQDGQA (328 aa)) is disordered. 2 stretches are compositionally biased toward basic and acidic residues: residues 87–97 (KEYDEKKKEQG) and 114–126 (LTGEEDLKPEDSV). The span at 148–168 (SSIGLAISSDGASSSSAALSS) shows a compositional bias: low complexity. 3 stretches are compositionally biased toward pro residues: residues 198–207 (PLPPLPPLPP), 216–227 (SPFPPPPPGPPP), and 235–253 (PPLPPPPQLPQSSQPPPPG). Composition is skewed to polar residues over residues 267-281 (SDFTFDNRMNANITS), 300-312 (AESNASSFQNANL), and 326-343 (QQHQSTFAGAAASLTNFQ). Composition is skewed to pro residues over residues 346–369 (VHPPPGMLRFPPPPPPLDMHPPHP) and 378–403 (PRPPYGPPPGPPPMMRPPLPPGPPPS).

In seedlings, mostly expressed in the shoot apical meristem (SAM) and root tip.

The protein resides in the nucleus. Its function is as follows. Involved in the regulation of flowering time in both long and short days. This Arabidopsis thaliana (Mouse-ear cress) protein is Protein EARLY FLOWERING 5.